A 1045-amino-acid polypeptide reads, in one-letter code: 3-hydroxy-3-methylglutaryl-coenzyme A reductase 2 (1045 aa).

At 1–24 (MSLPLKTIVHLVKPFACTARFSAR) the chain is on the cytoplasmic side. The chain crosses the membrane as a helical span at residues 25–45 (YPIHVIVVAVLLSAAAYLSVT). The Lumenal portion of the chain corresponds to 46 to 186 (QSYLNEWKLD…FSNKTSEFDQ (141 aa)). Residues Asn-115, Asn-150, Asn-158, and Asn-179 are each glycosylated (N-linked (GlcNAc...) asparagine). The chain crosses the membrane as a helical span at residues 187-207 (FDLFIILAAYLTLFYTLCCLF). The SSD domain maps to 188-356 (DLFIILAAYL…ATFYSAILSM (169 aa)). The Cytoplasmic portion of the chain corresponds to 208–216 (NDMRKIGSK). A helical transmembrane segment spans residues 217-237 (FWLSFSALSNSACALYLSLYT). At 238 to 243 (THSLLK) the chain is on the lumenal side. A helical membrane pass occupies residues 244 to 264 (KPASLLSLVIGLPFIVVIIGF). Residues 265–301 (KHKVRLAAFSLQKFHRISIDKKITVSNIIYEAMFQEG) lie on the Cytoplasmic side of the membrane. A helical membrane pass occupies residues 302–322 (AYLIRDYLFYISSFIGCAIYA). Over 323-324 (RH) the chain is Lumenal. A helical membrane pass occupies residues 325-345 (LPGLVNFCILSTFMLVFDLLL). Residues 346–402 (SATFYSAILSMKLEINIIHRSTVIRQTLEEDGVVPTTADIIYKDETASEPHFLRSNV) are Cytoplasmic-facing. Residues 403–423 (AIILGKASVIGLLLLINLYVF) traverse the membrane as a helical segment. At 424-497 (TDKLNATILN…DSVSNAIRDQ (74 aa)) the chain is on the lumenal side. N-linked (GlcNAc...) asparagine glycans are attached at residues Asn-428 and Asn-455. Residues 498-518 (FISKLLFFAFAVSISINVYLL) form a helical membrane-spanning segment. The Cytoplasmic segment spans residues 519–1045 (NAAKIHTGYM…GPPCKTSALL (527 aa)). Thr-565 is modified (phosphothreonine). The Charge relay system role is filled by Glu-710. Position 716-722 (716-722 (SAMRGCK)) interacts with CoA. NADP(+) contacts are provided by residues 777–779 (SRF) and 804–812 (DAMGMNMIS). Residue Lys-844 is the Charge relay system of the active site. Residue 873-875 (VLK) coordinates CoA. Asp-920 acts as the Charge relay system in catalysis. 1015-1016 (SH) serves as a coordination point for CoA. His-1016 serves as the catalytic Proton donor. The tract at residues 1018 to 1045 (THNRKTNKANELPQPSNKGPPCKTSALL) is disordered. 1020-1021 (NR) contributes to the NADP(+) binding site.

Belongs to the HMG-CoA reductase family.

Its subcellular location is the endoplasmic reticulum membrane. It localises to the nucleus envelope. The catalysed reaction is (R)-mevalonate + 2 NADP(+) + CoA = (3S)-3-hydroxy-3-methylglutaryl-CoA + 2 NADPH + 2 H(+). Its pathway is metabolic intermediate biosynthesis; (R)-mevalonate biosynthesis; (R)-mevalonate from acetyl-CoA: step 3/3. In terms of biological role, HMG-CoA reductase; part of the first module of ergosterol biosynthesis pathway constitutes by the early steps of the pathway, conserved across all eukaryotes, and which results in the formation of mevalonate from acetyl-coenzyme A (acetyl-CoA). HMG1 and HMG2 catalyze the reduction of hydroxymethylglutaryl-CoA (HMG-CoA) to mevalonate that is the rate-limiting step within the first mosule. The first module starts with the action of the cytosolic acetyl-CoA acetyltransferase ERG10 that catalyzes the formation of acetoacetyl-CoA. The hydroxymethylglutaryl-CoA synthase ERG13 then condenses acetyl-CoA with acetoacetyl-CoA to form HMG-CoA. The rate-limiting step of the early module is the reduction to mevalonate by the 3-hydroxy-3-methylglutaryl-coenzyme A (HMG-CoA) reductases HMG1 and HMG2 which are derived from a single ancestral HMGR gene by gene duplication. This chain is 3-hydroxy-3-methylglutaryl-coenzyme A reductase 2, found in Saccharomyces cerevisiae (strain ATCC 204508 / S288c) (Baker's yeast).